The chain runs to 389 residues: Mannuronan synthase (389 aa).

Positions 16–116 constitute a PilZ domain; sequence QRQFARVKLP…EVAALRYLIT (101 aa).

Belongs to the Alg44 family.

The protein localises to the periplasm. The catalysed reaction is [(1-&gt;4)-beta-D-mannuronosyl](n) + GDP-alpha-D-mannuronate = [(1-&gt;4)-beta-D-mannuronosyl](n+1) + GDP + H(+). Its pathway is glycan biosynthesis; alginate biosynthesis. Functionally, required for alginate biosynthesis. The sequence is that of Mannuronan synthase (alg44) from Pseudomonas aeruginosa (strain ATCC 15692 / DSM 22644 / CIP 104116 / JCM 14847 / LMG 12228 / 1C / PRS 101 / PAO1).